Here is a 293-residue protein sequence, read N- to C-terminus: Glutamyl-Q tRNA(Asp) synthetase (293 aa).

L-glutamate is bound by residues 9–13 and glutamate 45; that span reads RFAPS. A 'HIGH' region motif is present at residues 12–22; that stretch reads PSPSGELHFGS. Zn(2+)-binding residues include cysteine 101, cysteine 103, tyrosine 115, and cysteine 119. Residues tyrosine 172 and arginine 190 each contribute to the L-glutamate site. The 'KMSKS' region signature appears at 228 to 232; the sequence is KLSKQ. Residue lysine 231 participates in ATP binding.

Belongs to the class-I aminoacyl-tRNA synthetase family. GluQ subfamily. Zn(2+) serves as cofactor.

In terms of biological role, catalyzes the tRNA-independent activation of glutamate in presence of ATP and the subsequent transfer of glutamate onto a tRNA(Asp). Glutamate is transferred on the 2-amino-5-(4,5-dihydroxy-2-cyclopenten-1-yl) moiety of the queuosine in the wobble position of the QUC anticodon. The polypeptide is Glutamyl-Q tRNA(Asp) synthetase (Klebsiella pneumoniae (strain 342)).